Here is a 152-residue protein sequence, read N- to C-terminus: Small ribosomal subunit protein uS11B (152 aa).

The segment at 131 to 152 (EDVTPIPSDSTRRKGGRRGRRL) is disordered. A compositionally biased stretch (basic residues) spans 143–152 (RKGGRRGRRL).

It belongs to the universal ribosomal protein uS11 family.

In Anopheles gambiae (African malaria mosquito), this protein is Small ribosomal subunit protein uS11B.